A 334-amino-acid polypeptide reads, in one-letter code: MTVRVGINGFGRIGRNVFRAAATRGADLEIVAVNDLGDVATMAHLLAYDSILGRFPEEVTAEPGAIRAGDTTVKVLAERDPAALPWGDLGVDVVIESTGIFTDAAKARAHVDGGAKKVIIAAPASNEDVTVVLGVNQDAYDPERHTIISNASCTTNCLGVLAKVLHDAVGIESGMMTTVHAYTQDQNLQDAPHKDLRRARAAGLNIVPTSSGAAKAIGLVLPELQGRLDAFALRVPVPTGSVTDLTVTASRSTTVEEVKEAYAKAAAGAYKGLLSYTEAPIVSTDIAGDPASCVFDAELTRVLGSQVKVVGWYDNEWGYSNRLIDLALLVGDTL.

NAD(+) is bound by residues 12–13, Asp-35, and Arg-79; that span reads RI. Residues 152 to 154, Thr-183, Arg-198, 211 to 212, and Arg-234 contribute to the D-glyceraldehyde 3-phosphate site; these read SCT and SG. The active-site Nucleophile is Cys-153. Position 315 (Asn-315) interacts with NAD(+).

It belongs to the glyceraldehyde-3-phosphate dehydrogenase family. In terms of assembly, homotetramer.

It is found in the cytoplasm. The catalysed reaction is D-glyceraldehyde 3-phosphate + phosphate + NAD(+) = (2R)-3-phospho-glyceroyl phosphate + NADH + H(+). It functions in the pathway carbohydrate degradation; glycolysis; pyruvate from D-glyceraldehyde 3-phosphate: step 1/5. With respect to regulation, resistant to pentalenolactone. Functionally, catalyzes the oxidative phosphorylation of glyceraldehyde 3-phosphate (G3P) to 1,3-bisphosphoglycerate (BPG) using the cofactor NAD. The first reaction step involves the formation of a hemiacetal intermediate between G3P and a cysteine residue, and this hemiacetal intermediate is then oxidized to a thioester, with concomitant reduction of NAD to NADH. The reduced NADH is then exchanged with the second NAD, and the thioester is attacked by a nucleophilic inorganic phosphate to produce BPG. This chain is Glyceraldehyde-3-phosphate dehydrogenase 1 (gap1), found in Streptomyces avermitilis (strain ATCC 31267 / DSM 46492 / JCM 5070 / NBRC 14893 / NCIMB 12804 / NRRL 8165 / MA-4680).